The chain runs to 256 residues: Protein RGF1 INDUCIBLE TRANSCRIPTION FACTOR 1 (256 aa).

The B box-type zinc-finger motif lies at 21–59; that stretch reads CPYHETAKKNERNVCCLDCCTSLCPHCVPSHRFHRLLQV.

Expressed predominantly in root meristematic zones.

It is found in the nucleus. Probable transcription factor that plays a central role in mediating RGF1 hormone peptide signaling leading to the production of reactive oxygen species (ROS) in roots to modulate meristem size and root growth, probably via oxidative post-translational modification of the transcription factor PLETHORA (e.g. PLT1 and PLT2). In Arabidopsis thaliana (Mouse-ear cress), this protein is Protein RGF1 INDUCIBLE TRANSCRIPTION FACTOR 1.